A 1287-amino-acid polypeptide reads, in one-letter code: SCL-interrupting locus protein (1287 aa).

Met-1 carries the post-translational modification N-acetylmethionine. Residues 1-1018 are interaction with RBM14; that stretch reads MEPIYPFARP…IDSPTKVKKN (1018 aa). An interaction with CPAP region spans residues 231–781; it reads YKYGYLTMDE…VSVEAQSSPG (551 aa). Disordered regions lie at residues 378–417 and 508–533; these read RSSQ…SQKI and PPAY…PSHD. Ser-395 is modified (phosphoserine). Positions 517–529 are enriched in polar residues; the sequence is HTRNSIKPSSHNG. The segment at 584–779 is PIN1-binding; that stretch reads PMELQIPTPP…ELVSVEAQSS (196 aa). Phosphoserine occurs at positions 753, 779, and 1135.

As to quaternary structure, homodimer. Interacts with PIN1 via its WW domain. This interaction is dependent on STIL mitotic phosphorylation. Interacts with CPAP. Interacts with RBM14 and this interaction interferes with the interaction of STIL with CPAP. Forms a complex with CPAP and SASS6. Interacts (via N-terminus) with CEP85; this interaction is essential for efficient centriolar targeting of STIL and subsequent PLK4 activation. Post-translationally, ubiquitinated. Phosphorylated following the activation of the mitotic checkpoint. As to expression, expressed in all hematopoietic tissues and cell lines. Highly expressed in a variety of tumors characterized by increased mitotic activity with highest expression in lung cancer.

It is found in the cytoplasm. It localises to the cytosol. The protein resides in the cytoskeleton. Its subcellular location is the microtubule organizing center. The protein localises to the centrosome. It is found in the centriole. It localises to the cell cortex. Immediate-early gene. Plays an important role in embryonic development as well as in cellular growth and proliferation; its long-term silencing affects cell survival and cell cycle distribution as well as decreases CDK1 activity correlated with reduced phosphorylation of CDK1. Plays a role as a positive regulator of the sonic hedgehog pathway, acting downstream of PTCH1. Plays an important role in the regulation of centriole duplication. Required for the onset of procentriole formation and proper mitotic progression. During procentriole formation, is essential for the correct loading of SASS6 and CPAP to the base of the procentriole to initiate procentriole assembly. In complex with STIL acts as a modulator of PLK4-driven cytoskeletal rearrangements and directional cell motility. The sequence is that of SCL-interrupting locus protein (STIL) from Homo sapiens (Human).